The following is a 626-amino-acid chain: MIKKEFKAESKRLLDLMINSIYTHKEIFLRELISNSSDAIDKIYYKALTDESMIFNKEDYYIKITTDKENKMLIISDMGIGMTKEELEENLGVIAQSGSFTFKKENEIKDGFDIIGQFGVGFYSAFMVADSVTVISKALGSDQGYKWESIGAEGYTIEPYEKESVGTEIILKLKENTEDEKYEDYLEAYRLKTIIKKYSDFIRYPIKMDIETSKPKEGAEGEYEEIVEEQVVNSMVPMWRRNKNELTKEDYDLFYSEKHYGFDKPLKHIHISADGAVRYNAILFIPEKIPYDFYTKEYEKGLELYSSGVLIMNKCSDLLPDYFSFVKGMVDSEDLSLNISREMLQHDRQLKIIAKKIKEKIKSELELLLKNERERYEEFYDSFGRQIKYGVYSDFGQNKETLKDLLLFYSSKEKKMVTLDEYVGRMKEDQKYIYYASGDSIEKIDKMPQTELLAEQGYEILYFADDVDEFAIRVLVDYKEKEFKSVSSGDLGIEEKDEKEEQEEQTQGSKEVFAFMKEALSQKVKDVRPSKRLKNHPVCLATDGDVTIEMEKILSAMPNNQEIKAERVLEININHDVFKTLKEAFDNDQEKLKIYTNVLYNQALLIEGLTINDPVEFTNDICKLMS.

An a; substrate-binding region spans residues Met-1–Arg-341. The interval Glu-342 to Lys-552 is b. The segment at Ile-553–Ser-626 is c.

Belongs to the heat shock protein 90 family. As to quaternary structure, homodimer.

It localises to the cytoplasm. Its function is as follows. Molecular chaperone. Has ATPase activity. The polypeptide is Chaperone protein HtpG (Alkaliphilus metalliredigens (strain QYMF)).